A 207-amino-acid chain; its full sequence is dTTP/UTP pyrophosphatase (207 aa).

Catalysis depends on D80, which acts as the Proton acceptor.

It belongs to the Maf family. YhdE subfamily. A divalent metal cation is required as a cofactor.

The protein resides in the cytoplasm. The enzyme catalyses dTTP + H2O = dTMP + diphosphate + H(+). It catalyses the reaction UTP + H2O = UMP + diphosphate + H(+). Functionally, nucleoside triphosphate pyrophosphatase that hydrolyzes dTTP and UTP. May have a dual role in cell division arrest and in preventing the incorporation of modified nucleotides into cellular nucleic acids. The chain is dTTP/UTP pyrophosphatase (maf1) from Agrobacterium fabrum (strain C58 / ATCC 33970) (Agrobacterium tumefaciens (strain C58)).